Consider the following 456-residue polypeptide: uncharacterized protein (456 aa).

This sequence belongs to the herpesviridae UL49 family.

This is an uncharacterized protein from Equus caballus (Horse).